Reading from the N-terminus, the 219-residue chain is Proteasome subunit beta type-9 (219 aa).

The propeptide at 1–20 (MLRAGAPTAGSFRTEEVHTG) is removed in mature form. T21 serves as the catalytic Nucleophile. K53 and K109 each carry N6-acetyllysine.

Belongs to the peptidase T1B family. The 26S proteasome consists of a 20S proteasome core and two 19S regulatory subunits. The 20S proteasome core is composed of 28 subunits that are arranged in four stacked rings, resulting in a barrel-shaped structure. The two end rings are each formed by seven alpha subunits, and the two central rings are each formed by seven beta subunits. The catalytic chamber with the active sites is on the inside of the barrel. Component of the immunoproteasome, where it displaces the equivalent housekeeping subunit PSMB6. Component of the spermatoproteasome, a form of the proteasome specifically found in testis. Autocleaved. The resulting N-terminal Thr residue of the mature subunit is responsible for the nucleophile proteolytic activity.

Its subcellular location is the cytoplasm. The protein resides in the nucleus. The catalysed reaction is Cleavage of peptide bonds with very broad specificity.. The proteasome is a multicatalytic proteinase complex which is characterized by its ability to cleave peptides with Arg, Phe, Tyr, Leu, and Glu adjacent to the leaving group at neutral or slightly basic pH. The proteasome has an ATP-dependent proteolytic activity. This subunit is involved in antigen processing to generate class I binding peptides. In Mus musculus bactrianus (Southwestern Asian house mouse), this protein is Proteasome subunit beta type-9 (Psmb9).